The primary structure comprises 514 residues: 2,3-bisphosphoglycerate-independent phosphoglycerate mutase (514 aa).

Mn(2+) contacts are provided by Asp14 and Ser64. The active-site Phosphoserine intermediate is Ser64. Residues His125, 155–156 (RD), Arg187, Arg193, 263–266 (RADR), and Lys336 each bind substrate. Asp403, His407, Asp444, His445, and His463 together coordinate Mn(2+).

This sequence belongs to the BPG-independent phosphoglycerate mutase family. As to quaternary structure, monomer. It depends on Mn(2+) as a cofactor.

The catalysed reaction is (2R)-2-phosphoglycerate = (2R)-3-phosphoglycerate. Its pathway is carbohydrate degradation; glycolysis; pyruvate from D-glyceraldehyde 3-phosphate: step 3/5. In terms of biological role, catalyzes the interconversion of 2-phosphoglycerate and 3-phosphoglycerate. This is 2,3-bisphosphoglycerate-independent phosphoglycerate mutase from Shewanella pealeana (strain ATCC 700345 / ANG-SQ1).